A 205-amino-acid polypeptide reads, in one-letter code: MQGFVLLISGPSGAGKSTLLKKLFDEFEDELYFSISSTTRKPREGEKNGIHYHFISHEEFQKGIDSDHFLEWARVHENFYGTSLKHTQNALDNGKIVVFDIDVQGFKIARKKMADKIVSVFITTKNKDELKKRLIKRNTDTIIQLEKRLQNASDEMKELSEYDYLIINDELKQSYEALRAILIAHKFRTKGQNLGQIQNIWNEGE.

Residues 3-183 (GFVLLISGPS…SYEALRAILI (181 aa)) form the Guanylate kinase-like domain. ATP is bound at residue 10–17 (GPSGAGKS).

The protein belongs to the guanylate kinase family.

The protein localises to the cytoplasm. The enzyme catalyses GMP + ATP = GDP + ADP. In terms of biological role, essential for recycling GMP and indirectly, cGMP. This chain is Guanylate kinase, found in Campylobacter jejuni (strain RM1221).